The chain runs to 83 residues: Snake venom metalloproteinase BnP1 (83 aa).

The region spanning 8 to 83 (SYIELAVVAD…NPQCIINQPI (76 aa)) is the Peptidase M12B domain. Residues E11, C77, and N80 each coordinate Ca(2+).

Belongs to the venom metalloproteinase (M12B) family. P-I subfamily. As to quaternary structure, monomer. It depends on Zn(2+) as a cofactor. As to expression, expressed by the venom gland.

It localises to the secreted. With respect to regulation, inhibited by EDTA. In terms of biological role, this protein is a zinc protease from snake venom that is devoid of significant myotoxic and hemorrhagic activities. It hydrolyzes the Aalpha-chain and more slowly the Bbeta-chain of fibrin and fibrinogen, without affecting the gamma-chains. It induces cell detachment and a apoptosis (anoikis) in endothelial cells. The sequence is that of Snake venom metalloproteinase BnP1 from Bothrops pauloensis (Neuwied's lancehead).